The primary structure comprises 520 residues: Transactivator/viroplasmin protein (520 aa).

Disordered regions lie at residues 103–126 (SDFLRPHQGIPIPPKPEPSSSVAP) and 487–520 (EDASADSGPKDGPPPTRSIVEKEDVPTTSSKQVD).

The protein belongs to the caulimoviridae viroplasmin family.

It is found in the host cytoplasm. Functionally, enhances the ribosomal termination-reinitiation event leading to the translation of major open reading frames on the polycistronic viral RNAs. This Arabidopsis thaliana (Mouse-ear cress) protein is Transactivator/viroplasmin protein.